The following is a 503-amino-acid chain: Excitatory amino acid transporter (503 aa).

The Cytoplasmic portion of the chain corresponds to 1–18 (MPPDTRINKEIMVSWIRK). 3 helical membrane-spanning segments follow: residues 19 to 39 (NLLLVLTVSSVVLGALCGFLL), 59 to 79 (LMHMLKMMILPLIMSSLISGL), and 96 to 116 (TYYMFTTAVAVVTGIFLVLVI). Residues 117–198 (HPGDPTIKKE…SLDYVKASVE (82 aa)) lie on the Extracellular side of the membrane. Residues N177 and N187 are each glycosylated (N-linked (GlcNAc...) asparagine). The next 5 membrane-spanning stretches (helical) occupy residues 199–219 (YTSGMNVLGVIVFCIAIGISL), 239–259 (VIMKLVMTVMWYSPFGIFCLI), 281–301 (VTVLSGLAIHSLISLPLIFFV), 369–389 (AVAAIFIAQINGVHLSFGQVV), and 400–420 (IGAASVPSAGLVTMLLVLTAV).

Belongs to the dicarboxylate/amino acid:cation symporter (DAACS) (TC 2.A.23) family.

The protein resides in the membrane. Transports L-glutamate and also L- and D-aspartate. Essential for terminating the postsynaptic action of glutamate by rapidly removing released glutamate from the synaptic cleft. Acts as a symport by cotransporting sodium. The polypeptide is Excitatory amino acid transporter (glt-1) (Caenorhabditis elegans).